The sequence spans 583 residues: Membrane-bound O-acyltransferase gup1 (583 aa).

Residues 1–52 (MLRLFRFDVLETSTKDTERPNSKSSRLSSTSGSSHPSSSSRLTVRSAVPEKS) lie on the Extracellular side of the membrane. The interval 15–42 (KDTERPNSKSSRLSSTSGSSHPSSSSRL) is disordered. Over residues 22–40 (SKSSRLSSTSGSSHPSSSS) the composition is skewed to low complexity. Residues 53 to 73 (AFGSIEFIFYFSVILSILTIA) traverse the membrane as a helical segment. The Cytoplasmic segment spans residues 74–119 (CFKIHYVSSPKHPNYKNIEKYLKPGWLFGQKVDSADFQYSAFRENM). Residues 120-140 (PILLLVIIVYNFLWRLVKLVF) form a helical membrane-spanning segment. At 141–159 (TKNTNDELAIKNNYRLCFS) the chain is on the extracellular side. Residues 160 to 180 (LLFALLVYGTGVIYVLTIALI) traverse the membrane as a helical segment. The Cytoplasmic segment spans residues 181–191 (NYLISKSLKNS). Residues 192-212 (IFNPLLTWTLDISVVFFKEYF) traverse the membrane as a helical segment. Over 213-298 (AYCKFSSLHP…SCLDEDYNLK (86 aa)) the chain is Extracellular. A helical transmembrane segment spans residues 299–319 (NFLTYIFYAPLYLAGPIISFN). Residues 320 to 343 (NFMSQMKYPTVSTLKYRNLLYAIR) are Cytoplasmic-facing. Residues 344-364 (FLVCVLTMEFLLHYAYVTAIS) form a helical membrane-spanning segment. The Extracellular portion of the chain corresponds to 365–373 (KDGNWNQYS). Residues 374–394 (AVESAMISFIVLFMTWLKLLI) traverse the membrane as a helical segment. Topologically, residues 395–444 (PWRLFRLWSLIDDIEPPENIVRCMCNNYSAVGFWRAWHRSFNRWLIRYIY) are cytoplasmic. Helical transmembrane passes span 445 to 465 (VPLGGSNHSILNLFIIFTFVA) and 466 to 486 (LWHDISWELFAWGWLIVLFIL). His468 is a catalytic residue. The Cytoplasmic segment spans residues 487–512 (PERLCCFMSRRTGLTKHPYYRYISGF). The helical transmembrane segment at 513–533 (GAALNIYFMIICNLIGFAVGI) threads the bilayer. Over 534–549 (DGIKNVLVSFFLTLKG) the chain is Extracellular. The helical transmembrane segment at 550-570 (AMSAIAAFIMFFSAVQIMFQI) threads the bilayer. At 571–583 (RVNEEEEGINLRC) the chain is on the cytoplasmic side.

It belongs to the membrane-bound acyltransferase family.

It is found in the cell membrane. The protein localises to the endoplasmic reticulum membrane. Its subcellular location is the mitochondrion membrane. Membrane-bound O-acyltransferase involved in the remodeling of glycosylphosphatidylinositol (GPI) anchors. Acts only on GPI-anchored proteins, but not on free GPI lipids. Also involved in lipid metabolism, having profound effects on sphingolipid-sterol-ordered domains integrity and assembly. Involved in cell integrity and apoptosis. In Schizosaccharomyces pombe (strain 972 / ATCC 24843) (Fission yeast), this protein is Membrane-bound O-acyltransferase gup1 (gup1).